The primary structure comprises 466 residues: Adenosylhomocysteinase (466 aa).

Substrate-binding residues include threonine 57, aspartate 132, and glutamate 192. Residue 193–195 (TTT) participates in NAD(+) binding. Substrate contacts are provided by lysine 222 and aspartate 226. NAD(+)-binding positions include asparagine 227, 256–261 (GYGDVG), glutamate 279, asparagine 314, 335–337 (IGH), and asparagine 380.

This sequence belongs to the adenosylhomocysteinase family. NAD(+) is required as a cofactor.

The protein localises to the cytoplasm. It catalyses the reaction S-adenosyl-L-homocysteine + H2O = L-homocysteine + adenosine. It participates in amino-acid biosynthesis; L-homocysteine biosynthesis; L-homocysteine from S-adenosyl-L-homocysteine: step 1/1. Its function is as follows. May play a key role in the regulation of the intracellular concentration of adenosylhomocysteine. The polypeptide is Adenosylhomocysteinase (Mesorhizobium japonicum (strain LMG 29417 / CECT 9101 / MAFF 303099) (Mesorhizobium loti (strain MAFF 303099))).